The primary structure comprises 548 residues: Cilia- and flagella-associated protein 97 (548 aa).

A phosphoserine mark is found at Ser8 and Ser19. Disordered regions lie at residues 85–297 (NYLT…RQEN), 407–431 (LSRQ…PPKL), and 497–548 (YSPL…LRSH). The span at 91 to 107 (GNERKPKFPSKEQHVEN) shows a compositional bias: basic and acidic residues. Over residues 112–121 (TRSPSLLTSS) the composition is skewed to low complexity. The span at 152-161 (DYYTDGEESS) shows a compositional bias: acidic residues. Thr155 is subject to Phosphothreonine. Ser160 and Ser161 each carry phosphoserine. The segment covering 191–209 (KASSSSLSSSSSRSSSDCS) has biased composition (low complexity). Over residues 214 to 237 (DMQNKPDSGSSGKRVSSVTPSSPK) the composition is skewed to polar residues. Ser235 carries the post-translational modification Phosphoserine. The span at 238-248 (QKCKSGRKSSA) shows a compositional bias: basic residues. Ser259 is modified (phosphoserine). Over residues 264 to 289 (TDVTPASTPDSSPAQPFELSQSQNQK) the composition is skewed to polar residues. Positions 383 to 460 (RKNYSFTREE…ALLKRLEAVK (78 aa)) form a coiled coil. Polar residues-rich tracts occupy residues 504 to 514 (SRTSSATSGLS) and 537 to 548 (IQCSNSKVLRSH).

Belongs to the CFAP97 family.

This Rattus norvegicus (Rat) protein is Cilia- and flagella-associated protein 97.